Here is a 224-residue protein sequence, read N- to C-terminus: Ribonuclease 3 (224 aa).

The region spanning 5–127 (LERLCRRLNY…ILAAIYLDGG (123 aa)) is the RNase III domain. Residue E40 coordinates Mg(2+). D44 is an active-site residue. Mg(2+) is bound by residues D113 and E116. E116 is a catalytic residue. In terms of domain architecture, DRBM spans 154–224 (DAKTQLQEFL…AKAMLEQLQG (71 aa)).

This sequence belongs to the ribonuclease III family. As to quaternary structure, homodimer. Mg(2+) serves as cofactor.

Its subcellular location is the cytoplasm. It catalyses the reaction Endonucleolytic cleavage to 5'-phosphomonoester.. Functionally, digests double-stranded RNA. Involved in the processing of primary rRNA transcript to yield the immediate precursors to the large and small rRNAs (23S and 16S). Processes some mRNAs, and tRNAs when they are encoded in the rRNA operon. Processes pre-crRNA and tracrRNA of type II CRISPR loci if present in the organism. This chain is Ribonuclease 3, found in Legionella pneumophila (strain Paris).